A 192-amino-acid chain; its full sequence is Imidazoleglycerol-phosphate dehydratase (192 aa).

The protein belongs to the imidazoleglycerol-phosphate dehydratase family.

It is found in the cytoplasm. The catalysed reaction is D-erythro-1-(imidazol-4-yl)glycerol 3-phosphate = 3-(imidazol-4-yl)-2-oxopropyl phosphate + H2O. The protein operates within amino-acid biosynthesis; L-histidine biosynthesis; L-histidine from 5-phospho-alpha-D-ribose 1-diphosphate: step 6/9. In Methanocella arvoryzae (strain DSM 22066 / NBRC 105507 / MRE50), this protein is Imidazoleglycerol-phosphate dehydratase.